The sequence spans 379 residues: UDP-4-amino-4-deoxy-L-arabinose--oxoglutarate aminotransferase (379 aa).

K182 carries the post-translational modification N6-(pyridoxal phosphate)lysine.

It belongs to the DegT/DnrJ/EryC1 family. ArnB subfamily. In terms of assembly, homodimer. Pyridoxal 5'-phosphate serves as cofactor.

It catalyses the reaction UDP-4-amino-4-deoxy-beta-L-arabinose + 2-oxoglutarate = UDP-beta-L-threo-pentopyranos-4-ulose + L-glutamate. The protein operates within nucleotide-sugar biosynthesis; UDP-4-deoxy-4-formamido-beta-L-arabinose biosynthesis; UDP-4-deoxy-4-formamido-beta-L-arabinose from UDP-alpha-D-glucuronate: step 2/3. Its pathway is bacterial outer membrane biogenesis; lipopolysaccharide biosynthesis. Functionally, catalyzes the conversion of UDP-4-keto-arabinose (UDP-Ara4O) to UDP-4-amino-4-deoxy-L-arabinose (UDP-L-Ara4N). The modified arabinose is attached to lipid A and is required for resistance to polymyxin and cationic antimicrobial peptides. The protein is UDP-4-amino-4-deoxy-L-arabinose--oxoglutarate aminotransferase of Escherichia fergusonii (strain ATCC 35469 / DSM 13698 / CCUG 18766 / IAM 14443 / JCM 21226 / LMG 7866 / NBRC 102419 / NCTC 12128 / CDC 0568-73).